The following is a 377-amino-acid chain: Nitric oxide reductase FlRd-NAD(+) reductase (377 aa).

The protein belongs to the FAD-dependent oxidoreductase family. FAD is required as a cofactor.

It is found in the cytoplasm. The catalysed reaction is 2 reduced [nitric oxide reductase rubredoxin domain] + NAD(+) + H(+) = 2 oxidized [nitric oxide reductase rubredoxin domain] + NADH. It functions in the pathway nitrogen metabolism; nitric oxide reduction. One of at least two accessory proteins for anaerobic nitric oxide (NO) reductase. Reduces the rubredoxin moiety of NO reductase. The chain is Nitric oxide reductase FlRd-NAD(+) reductase from Escherichia fergusonii (strain ATCC 35469 / DSM 13698 / CCUG 18766 / IAM 14443 / JCM 21226 / LMG 7866 / NBRC 102419 / NCTC 12128 / CDC 0568-73).